We begin with the raw amino-acid sequence, 480 residues long: MGYSFDRASKDVVKKLQGRDLRPVECLSDATKFRLFHILQETPRSGWETEDIPVGFTLLDLLEPNFPVPEPEVSAPKPFIHVQSTDLEANLNVADIARGGVGYVGYGGYNIEVQSTSIPNPKLEILQNRKLLDKLPTFMKFCRMERKNLYVVTEAYEVSKDTMLTGLSSVNLLVKGFFKQLFKVRGKAGRSEKYSIPIPKGSVLAYKKQQLVIENNTCVILPSATKKKMTFPGTPKYASASEPTEIYRTELQGLWINDIEPIGRIQEPAHLDFKCLQYEVSEQTRLLPELSKDVQEVVLSSFLSMLYEGDRNVLHDLMKMLELSQLGHMDGPGGKILDELRKDSSNPCVDLKDLILYLLQALMVLSDSQLNLLARSVEMRLLPHQVELVTSILQPNFKYPWNIPFTVQPQLLAPLQGEGLAITYELLEECGLKMELNNPRSTWDLEAKMPLSALYGSLSFLQQLQKANSSFKPSLRPGYI.

The tract at residues 1-226 (MGYSFDRASK…TCVILPSATK (226 aa)) is triggers pyroptosis.

The protein belongs to the gasdermin family. As to quaternary structure, homooligomer; homooligomeric ring-shaped pore complex containing 27-28 subunits when inserted in the membrane. Cleavage by CASP8 relieves autoinhibition by releasing the N-terminal moiety (Gasdermin-C3, N-terminal) that initiates pyroptosis. In terms of processing, palmitoylated.

It is found in the cytoplasm. It localises to the cytosol. The protein localises to the cell membrane. Its activity is regulated as follows. The full-length protein before cleavage is inactive: intramolecular interactions between N- and C-terminal domains mediate autoinhibition in the absence of activation signal. The intrinsic pyroptosis-inducing activity is carried by the released N-terminal moiety (Gasdermin-C3, N-terminal) following cleavage by caspase CASP8. Its function is as follows. This form constitutes the precursor of the pore-forming protein: upon cleavage, the released N-terminal moiety (Gasdermin-C3, N-terminal) binds to membranes and forms pores, triggering pyroptosis. Functionally, pore-forming protein that causes membrane permeabilization and pyroptosis. Produced by the cleavage of gasdermin-C3 by caspase CASP8 in response to death signals. After cleavage, moves to the plasma membrane where it strongly binds to membrane inner leaflet lipids. Homooligomerizes within the membrane and forms pores of 10-15 nanometers (nm) of inner diameter, triggering pyroptosis. The protein is Gasdermin-C3 of Mus musculus (Mouse).